We begin with the raw amino-acid sequence, 317 residues long: NAD-dependent protein deacetylase Sirt6 (317 aa).

The Deacetylase sirtuin-type domain maps to aspartate 27–glutamate 273. NAD(+) is bound by residues alanine 53, threonine 57, phenylalanine 64, arginine 65, tryptophan 71, glutamine 113, and histidine 133. The Proton acceptor role is filled by histidine 133. Cysteine 141, cysteine 144, cysteine 166, and cysteine 177 together coordinate Zn(2+). NAD(+) is bound by residues glycine 215, asparagine 241, glutamine 243, and valine 259.

Belongs to the sirtuin family. Class IV subfamily. Zn(2+) serves as cofactor. As to expression, widely expressed.

It localises to the nucleus. Its subcellular location is the chromosome. It catalyses the reaction N(6)-acetyl-L-lysyl-[protein] + NAD(+) + H2O = 2''-O-acetyl-ADP-D-ribose + nicotinamide + L-lysyl-[protein]. Functionally, NAD-dependent histone deacylase that acts as a regulator of life span. The protein is NAD-dependent protein deacetylase Sirt6 of Drosophila melanogaster (Fruit fly).